Consider the following 702-residue polypeptide: Polyribonucleotide nucleotidyltransferase 3 (702 aa).

Mg(2+) contacts are provided by Asp-483 and Asp-489. The KH domain occupies Pro-550–Ile-609. Residues Gly-619–Lys-687 form the S1 motif domain.

The protein belongs to the polyribonucleotide nucleotidyltransferase family. Mg(2+) is required as a cofactor.

The protein localises to the cytoplasm. It catalyses the reaction RNA(n+1) + phosphate = RNA(n) + a ribonucleoside 5'-diphosphate. Involved in mRNA degradation. Catalyzes the phosphorolysis of single-stranded polyribonucleotides processively in the 3'- to 5'-direction. The protein is Polyribonucleotide nucleotidyltransferase 3 of Alkaliphilus metalliredigens (strain QYMF).